The primary structure comprises 117 residues: Large ribosomal subunit protein bL20 (117 aa).

The protein belongs to the bacterial ribosomal protein bL20 family.

Functionally, binds directly to 23S ribosomal RNA and is necessary for the in vitro assembly process of the 50S ribosomal subunit. It is not involved in the protein synthesizing functions of that subunit. This Nitratidesulfovibrio vulgaris (strain DSM 19637 / Miyazaki F) (Desulfovibrio vulgaris) protein is Large ribosomal subunit protein bL20.